A 438-amino-acid polypeptide reads, in one-letter code: Iroquois-class homeodomain protein IRX-6 (438 aa).

The homeobox DNA-binding region spans Ser143 to Asn205. 2 disordered regions span residues Asn205–Val270 and Pro388–Gly438. Positions Lys214–Ser223 are enriched in basic and acidic residues. Positions Leu252–Ala268 are enriched in acidic residues.

It belongs to the TALE/IRO homeobox family. As to expression, expressed in a subset of retinal ganglion cells and bipolar cells; including in type 2 and type 3a bipolar cells.

It is found in the nucleus. Functionally, transcription factor. Binds to the iroquois binding site (IBS) motif of target genes to regulate gene expression; functions as a transcriptional activator or repressor. Modulates expression of RCVRN, VSX1, BHLHE22/BHLHB5 and TACR3/Nk3r. Required downstream of retinal bipolar cell specification for the terminal differentiation of type 2, type 3a and possibly type 6 bipolar cells. This Mus musculus (Mouse) protein is Iroquois-class homeodomain protein IRX-6 (Irx6).